The following is a 64-amino-acid chain: Large ribosomal subunit protein bL33c (64 aa).

It belongs to the bacterial ribosomal protein bL33 family.

It localises to the plastid. Its subcellular location is the cyanelle. This chain is Large ribosomal subunit protein bL33c (rpl33), found in Cyanophora paradoxa.